The primary structure comprises 396 residues: S-adenosylmethionine synthase (396 aa).

Histidine 16 is a binding site for ATP. Position 18 (aspartate 18) interacts with Mg(2+). Glutamate 44 is a binding site for K(+). L-methionine contacts are provided by glutamate 57 and glutamine 100. The interval 100–110 (QSVDIAQGVDR) is flexible loop. ATP-binding positions include 165–167 (DAK), aspartate 240, 246–247 (RK), alanine 263, and lysine 267. Residue aspartate 240 coordinates L-methionine. Position 271 (lysine 271) interacts with L-methionine.

Belongs to the AdoMet synthase family. In terms of assembly, homotetramer; dimer of dimers. It depends on Mg(2+) as a cofactor. K(+) is required as a cofactor.

The protein localises to the cytoplasm. It catalyses the reaction L-methionine + ATP + H2O = S-adenosyl-L-methionine + phosphate + diphosphate. It functions in the pathway amino-acid biosynthesis; S-adenosyl-L-methionine biosynthesis; S-adenosyl-L-methionine from L-methionine: step 1/1. Functionally, catalyzes the formation of S-adenosylmethionine (AdoMet) from methionine and ATP. The overall synthetic reaction is composed of two sequential steps, AdoMet formation and the subsequent tripolyphosphate hydrolysis which occurs prior to release of AdoMet from the enzyme. The protein is S-adenosylmethionine synthase of Pseudomonas syringae pv. syringae (strain B728a).